The primary structure comprises 602 residues: Elongation factor 4 (602 aa).

Residues 6-188 (DHIRNFSIVA…AIVNKLPAPK (183 aa)) enclose the tr-type G domain. GTP-binding positions include 18–23 (DHGKST) and 135–138 (NKID).

Belongs to the TRAFAC class translation factor GTPase superfamily. Classic translation factor GTPase family. LepA subfamily.

It localises to the cell inner membrane. The catalysed reaction is GTP + H2O = GDP + phosphate + H(+). Required for accurate and efficient protein synthesis under certain stress conditions. May act as a fidelity factor of the translation reaction, by catalyzing a one-codon backward translocation of tRNAs on improperly translocated ribosomes. Back-translocation proceeds from a post-translocation (POST) complex to a pre-translocation (PRE) complex, thus giving elongation factor G a second chance to translocate the tRNAs correctly. Binds to ribosomes in a GTP-dependent manner. This is Elongation factor 4 from Brucella abortus (strain 2308).